The following is a 77-amino-acid chain: Delta/omega-plectoxin-Pt1a (77 aa).

A signal peptide spans methionine 1 to alanine 20. The propeptide occupies glutamate 21–arginine 34. 5 cysteine pairs are disulfide-bonded: cysteine 38-cysteine 51, cysteine 45-cysteine 57, cysteine 50-cysteine 67, cysteine 54-cysteine 74, and cysteine 59-cysteine 65. Residue serine 73 is the site of O-palmitoyl serine attachment. A Cysteine amide modification is found at cysteine 74.

Belongs to the neurotoxin 02 (plectoxin) family. 01 (Tx3) subfamily. As to expression, expressed by the venom gland.

It localises to the secreted. Excitatory toxin that acts on both calcium and sodium (Nav) channels. It preferentially blocks a subset of calcium channels that is apparently not required for neurotransmitter release, it decreases threshold for sodium channel activation and it slows sodium channel inactivation. As it enhances synaptic transmission by prolonging presynaptic release of neurotransmitter, its effects on sodium and calcium channels may act synergistically to sustain the terminal excitability. The polypeptide is Delta/omega-plectoxin-Pt1a (Plectreurys tristis (Spider)).